A 430-amino-acid chain; its full sequence is Target of rapamycin complex 1 subunit toc1 (430 aa).

Phosphoserine occurs at positions 204 and 399.

As to quaternary structure, the target of rapamycin complex 1 (TORC1) is composed of at least mip1, pop3/wat1, tco89, toc1 and tor2.

It is found in the cytoplasm. Component of TORC1, which regulates multiple cellular processes to control cell growth in response to environmental signals. Tor2 is essential for growth. Nutrient limitation and environmental stress signals cause inactivation of TORC1. Active TORC1 positively controls cell growth and ribosome biogenesis by regulating ribosomal protein gene expression. TORC1 negatively controls G1 cell-cycle arrest, sexual development and amino acid uptake. Represses mating, meiosis and sporulation efficiency by interfering with the functions of the transcription factor ste11 and the meiosis-promoting RNA-binding protein mei2. This is Target of rapamycin complex 1 subunit toc1 from Schizosaccharomyces pombe (strain 972 / ATCC 24843) (Fission yeast).